A 253-amino-acid polypeptide reads, in one-letter code: Small ribosomal subunit protein uS3 (253 aa).

In terms of domain architecture, KH type-2 spans 39-109; the sequence is IRNYVLARLK…EVKIDVVEVI (71 aa). The segment at 220–253 is disordered; that stretch reads DEMKKMKDRRNDGGAKGRDSRDNRSKRRSRSKRS. Over residues 221-242 the composition is skewed to basic and acidic residues; the sequence is EMKKMKDRRNDGGAKGRDSRDN. Residues 243-253 are compositionally biased toward basic residues; the sequence is RSKRRSRSKRS.

This sequence belongs to the universal ribosomal protein uS3 family. As to quaternary structure, part of the 30S ribosomal subunit. Forms a tight complex with proteins S10 and S14.

Binds the lower part of the 30S subunit head. Binds mRNA in the 70S ribosome, positioning it for translation. This Chlorobium chlorochromatii (strain CaD3) protein is Small ribosomal subunit protein uS3.